The following is a 545-amino-acid chain: CTP synthase (545 aa).

Residues 1 to 266 are amidoligase domain; that stretch reads MTTNYIFVTG…DDYICKRFSL (266 aa). Ser-14 contacts CTP. Residue Ser-14 coordinates UTP. Residues 15–20 and Asp-72 each bind ATP; that span reads SLGKGI. Mg(2+) contacts are provided by Asp-72 and Glu-140. Residues 147 to 149, 187 to 192, and Lys-223 each bind CTP; these read DIE and KTKPTQ. UTP is bound by residues 187–192 and Lys-223; that span reads KTKPTQ. Position 239-241 (239-241) interacts with ATP; the sequence is KDV. Residues 291–542 form the Glutamine amidotransferase type-1 domain; it reads TIGMVGKYIE…VKAASEHQKR (252 aa). L-glutamine is bound at residue Gly-352. The active-site Nucleophile; for glutamine hydrolysis is the Cys-379. Residues 380-383, Glu-403, and Arg-470 contribute to the L-glutamine site; that span reads LGMQ. Residues His-515 and Glu-517 contribute to the active site.

It belongs to the CTP synthase family. In terms of assembly, homotetramer.

It catalyses the reaction UTP + L-glutamine + ATP + H2O = CTP + L-glutamate + ADP + phosphate + 2 H(+). The enzyme catalyses L-glutamine + H2O = L-glutamate + NH4(+). The catalysed reaction is UTP + NH4(+) + ATP = CTP + ADP + phosphate + 2 H(+). It functions in the pathway pyrimidine metabolism; CTP biosynthesis via de novo pathway; CTP from UDP: step 2/2. Its activity is regulated as follows. Allosterically activated by GTP, when glutamine is the substrate; GTP has no effect on the reaction when ammonia is the substrate. The allosteric effector GTP functions by stabilizing the protein conformation that binds the tetrahedral intermediate(s) formed during glutamine hydrolysis. Inhibited by the product CTP, via allosteric rather than competitive inhibition. Its function is as follows. Catalyzes the ATP-dependent amination of UTP to CTP with either L-glutamine or ammonia as the source of nitrogen. Regulates intracellular CTP levels through interactions with the four ribonucleotide triphosphates. The sequence is that of CTP synthase from Salmonella schwarzengrund (strain CVM19633).